The following is a 323-amino-acid chain: ADP-L-glycero-D-manno-heptose-6-epimerase (323 aa).

NADP(+) is bound by residues 10-11 (FI), 31-32 (DN), lysine 38, arginine 53, 75-79 (MGACS), and asparagine 92. Catalysis depends on tyrosine 143, which acts as the Proton acceptor. Lysine 147 is an NADP(+) binding site. Asparagine 170 lines the substrate pocket. Residues valine 171 and lysine 179 each contribute to the NADP(+) site. Catalysis depends on lysine 179, which acts as the Proton acceptor. Residues aspartate 181, lysine 188, 202 to 205 (FRSC), arginine 216, and tyrosine 281 contribute to the substrate site.

It belongs to the NAD(P)-dependent epimerase/dehydratase family. HldD subfamily. In terms of assembly, homopentamer. It depends on NADP(+) as a cofactor.

The enzyme catalyses ADP-D-glycero-beta-D-manno-heptose = ADP-L-glycero-beta-D-manno-heptose. It functions in the pathway nucleotide-sugar biosynthesis; ADP-L-glycero-beta-D-manno-heptose biosynthesis; ADP-L-glycero-beta-D-manno-heptose from D-glycero-beta-D-manno-heptose 7-phosphate: step 4/4. Its function is as follows. Catalyzes the interconversion between ADP-D-glycero-beta-D-manno-heptose and ADP-L-glycero-beta-D-manno-heptose via an epimerization at carbon 6 of the heptose. This Nitratidesulfovibrio vulgaris (strain ATCC 29579 / DSM 644 / CCUG 34227 / NCIMB 8303 / VKM B-1760 / Hildenborough) (Desulfovibrio vulgaris) protein is ADP-L-glycero-D-manno-heptose-6-epimerase.